The following is a 355-amino-acid chain: S-adenosylmethionine:tRNA ribosyltransferase-isomerase (355 aa).

It belongs to the QueA family. In terms of assembly, monomer.

It localises to the cytoplasm. The catalysed reaction is 7-aminomethyl-7-carbaguanosine(34) in tRNA + S-adenosyl-L-methionine = epoxyqueuosine(34) in tRNA + adenine + L-methionine + 2 H(+). It participates in tRNA modification; tRNA-queuosine biosynthesis. Functionally, transfers and isomerizes the ribose moiety from AdoMet to the 7-aminomethyl group of 7-deazaguanine (preQ1-tRNA) to give epoxyqueuosine (oQ-tRNA). The chain is S-adenosylmethionine:tRNA ribosyltransferase-isomerase from Burkholderia lata (strain ATCC 17760 / DSM 23089 / LMG 22485 / NCIMB 9086 / R18194 / 383).